The following is a 626-amino-acid chain: Pheromone B alpha 3 receptor (626 aa).

7 helical membrane-spanning segments follow: residues 8–28 (LFPTFAFLGFVLALVPLPWHL), 36–56 (CFFMVWTALGCLNQFVNSIVW), 70–90 (ISIRITMGLSVGLPASSLCII), 113–133 (IIIDALICVLFPLVYIAMQYI), 163–183 (IWPVLIGMVSATYSVLALIEF), 208–228 (LMALAMTEMCCTVPLGIFVIV), and 271–291 (ELTRWLAPVSAMLFFAYFGFA). Disordered regions lie at residues 363–409 (KQYT…SSPI), 481–509 (ATFTSANNDTDEPTSPALPDTPSSCSSSA), 524–549 (STTDVTRDTGSLPIRRSPAGPPRLPS), and 571–626 (QDVA…RASV). Residues 376-391 (SSSGFSSSESTRFGSS) are compositionally biased toward low complexity. Residues 574-606 (ATGTAAPTTTAPAPASTTIAPATTTATAPTTTA) are compositionally biased toward low complexity.

The protein belongs to the G-protein coupled receptor 4 family.

The protein resides in the membrane. Its function is as follows. Receptor for the BAP3 pheromone, a prenylated mating factor. The polypeptide is Pheromone B alpha 3 receptor (BAR3) (Schizophyllum commune (strain H4-8 / FGSC 9210) (Split gill fungus)).